The following is a 273-amino-acid chain: Dermonecrotic toxin LarSicTox-alphaVII1 (273 aa).

The active site involves H5. Residues E25 and D27 each coordinate Mg(2+). H41 (nucleophile) is an active-site residue. Disulfide bonds link C45-C51 and C47-C192. Position 85 (D85) interacts with Mg(2+).

It belongs to the arthropod phospholipase D family. Class II subfamily. Mg(2+) serves as cofactor. As to expression, expressed by the venom gland.

The protein localises to the secreted. It catalyses the reaction an N-(acyl)-sphingosylphosphocholine = an N-(acyl)-sphingosyl-1,3-cyclic phosphate + choline. The enzyme catalyses an N-(acyl)-sphingosylphosphoethanolamine = an N-(acyl)-sphingosyl-1,3-cyclic phosphate + ethanolamine. It carries out the reaction a 1-acyl-sn-glycero-3-phosphocholine = a 1-acyl-sn-glycero-2,3-cyclic phosphate + choline. The catalysed reaction is a 1-acyl-sn-glycero-3-phosphoethanolamine = a 1-acyl-sn-glycero-2,3-cyclic phosphate + ethanolamine. In terms of biological role, dermonecrotic toxins cleave the phosphodiester linkage between the phosphate and headgroup of certain phospholipids (sphingolipid and lysolipid substrates), forming an alcohol (often choline) and a cyclic phosphate. This toxin acts on sphingomyelin (SM). It may also act on ceramide phosphoethanolamine (CPE), lysophosphatidylcholine (LPC) and lysophosphatidylethanolamine (LPE), but not on lysophosphatidylserine (LPS), and lysophosphatidylglycerol (LPG). It acts by transphosphatidylation, releasing exclusively cyclic phosphate products as second products. Induces dermonecrosis, hemolysis, increased vascular permeability, edema, inflammatory response, and platelet aggregation. In Loxosceles arizonica (Arizona brown spider), this protein is Dermonecrotic toxin LarSicTox-alphaVII1.